A 308-amino-acid chain; its full sequence is MEIHMTSIQELVINFHMTEACNYRCGYCYATWQDNSSDTELHHASENIHSLLLKLADYFFADNSLRQTLKYQSVRINFAGGEPVMLGSRFIDAILFAKQLGFATSIITNGHLLSTVMLKKIAVHLDMLGISFDTGDYLIAQSIGRVDRKKSWLSPARVLDVVTQYRALNPKGKVKINTVVNAYNWRENLTQTITQLKPDKWKLLRVLPVYSKEMTVLQWQYESYVHKHQVHADVIVVEDNDDMWQSYLMINPEGRFYQNAGACKGLTYSPPVLEVGVEEALKYINFNAEAFSKRYQSIHLPLAMSAGA.

Residues 7-253 (SIQELVINFH…WQSYLMINPE (247 aa)) enclose the Radical SAM core domain. The [4Fe-4S] cluster site is built by C21, C25, and C28.

It belongs to the radical SAM superfamily. Viperin family. [4Fe-4S] cluster serves as cofactor.

It catalyses the reaction CTP + AH2 + S-adenosyl-L-methionine = 3'-deoxy-3',4'-didehydro-CTP + 5'-deoxyadenosine + L-methionine + A + H2O + H(+). The enzyme catalyses GTP + AH2 + S-adenosyl-L-methionine = 3'-deoxy-3',4'-didehydro-GTP + 5'-deoxyadenosine + L-methionine + A + H2O + H(+). The catalysed reaction is UTP + AH2 + S-adenosyl-L-methionine = 3'-deoxy-3',4'-didehydro-UTP + 5'-deoxyadenosine + L-methionine + A + H2O + H(+). Its function is as follows. Expression of pVip58 in E.coli (strain MG1655) confers resistance to phages lambda, P1 and T7; delays culture collapse upon infection with T7. Catalyzes the conversion of cytidine triphosphate (CTP) to 3'-deoxy-3',4'-didehydro-CTP (ddhCTP), guanosine triphosphate (GTP) to 3'-deoxy-3',4'-didehydro-GTP (ddhGTP) and uridine triphosphate (UTP) to 3'-deoxy-3',4'-didehydro-UTP (ddhUTP), probably via a SAM-dependent radical mechanism. The modified nucleotide represses transcription from T7 RNA polymerase-directed genes (possibly by acting as chain terminators), strongly suggesting these nucleotides block viral polymerase transcription. The sequence is that of S-adenosylmethionine-dependent nucleotide dehydratase from Pseudoalteromonas ulvae.